Consider the following 543-residue polypeptide: tRNA (guanine(37)-N(1))-methyltransferase (543 aa).

Residues 1–59 constitute a mitochondrion transit peptide; the sequence is MLKSLCFVIRPAIVSRPQFRLPTIARLSLRQFQNQPQSVGFFTMAPLETRALALSPSAT. Residues His282, 320 to 321, and 348 to 349 each bind S-adenosyl-L-methionine; these read DL and DG. The tract at residues 366 to 405 is disordered; it reads DPAPPPKVSNRQRDREAKEARRKREQAKAAGQPVTETAPM. Residue Asn431 coordinates S-adenosyl-L-methionine.

Belongs to the class I-like SAM-binding methyltransferase superfamily. TRM5/TYW2 family. Monomer.

The protein localises to the mitochondrion matrix. It is found in the nucleus. Its subcellular location is the cytoplasm. The catalysed reaction is guanosine(37) in tRNA + S-adenosyl-L-methionine = N(1)-methylguanosine(37) in tRNA + S-adenosyl-L-homocysteine + H(+). In terms of biological role, specifically methylates the N1 position of guanosine-37 in various cytoplasmic and mitochondrial tRNAs. Methylation is not dependent on the nature of the nucleoside 5' of the target nucleoside. This is the first step in the biosynthesis of wybutosine (yW), a modified base adjacent to the anticodon of tRNAs and required for accurate decoding. The chain is tRNA (guanine(37)-N(1))-methyltransferase from Cryptococcus neoformans var. neoformans serotype D (strain JEC21 / ATCC MYA-565) (Filobasidiella neoformans).